Consider the following 208-residue polypeptide: Imidazoleglycerol-phosphate dehydratase (208 aa).

The protein belongs to the imidazoleglycerol-phosphate dehydratase family.

The protein localises to the cytoplasm. The catalysed reaction is D-erythro-1-(imidazol-4-yl)glycerol 3-phosphate = 3-(imidazol-4-yl)-2-oxopropyl phosphate + H2O. It participates in amino-acid biosynthesis; L-histidine biosynthesis; L-histidine from 5-phospho-alpha-D-ribose 1-diphosphate: step 6/9. The protein is Imidazoleglycerol-phosphate dehydratase of Paenarthrobacter aurescens (strain TC1).